The chain runs to 198 residues: C4b-binding protein beta chain (198 aa).

The first 17 residues, 1–17 (MFFWLMCYLVDVWLISA), serve as a signal peptide directing secretion. Residues 22–77 (HCPDPLLVTDEFSSLEPVNVNDTFMFKCNEHCIFKGSNWSQCRENHTRVTHSPVSK) form the Sushi 1; atypical; lacks a Cys domain. Residues Asn42, Asn59, and Asn66 are each glycosylated (N-linked (GlcNAc...) asparagine). Residues 79–135 (RDCGPPETPTHGYFEGRDFKSGSTITYYCEARYRLVGTQHQQCIDGEWTSAPPICEL) enclose the Sushi 2 domain. 2 cysteine pairs are disulfide-bonded: Cys81–Cys121 and Cys107–Cys133.

In terms of assembly, disulfide-linked complex of alpha and beta chains.

Its subcellular location is the secreted. Functionally, controls the classical pathway of complement activation. It binds as a cofactor to C3b/C4b inactivator (C3bINA), which then hydrolyzes the complement fragment C4b. It also accelerates the degradation of the C4bC2a complex (C3 convertase) by dissociating the complement fragment C2a. It also interacts with serum amyloid P component. The chain is C4b-binding protein beta chain (C4BPB) from Bos taurus (Bovine).